The sequence spans 316 residues: Acetaldehyde dehydrogenase (316 aa).

NAD(+) is bound at residue 11 to 14; the sequence is SGNI. Cysteine 131 serves as the catalytic Acyl-thioester intermediate. Residues 162–170 and asparagine 289 each bind NAD(+); that span reads SAGPGTRAN.

This sequence belongs to the acetaldehyde dehydrogenase family. Interacts with MhpE.

It carries out the reaction acetaldehyde + NAD(+) + CoA = acetyl-CoA + NADH + H(+). Its pathway is aromatic compound metabolism; 3-phenylpropanoate degradation. Its function is as follows. Catalyzes the conversion of acetaldehyde to acetyl-CoA, using NAD(+) and coenzyme A. Is the final enzyme in the meta-cleavage pathway for the degradation of aromatic compounds. The protein is Acetaldehyde dehydrogenase of Escherichia coli O81 (strain ED1a).